We begin with the raw amino-acid sequence, 457 residues long: Metacaspase-1 (457 aa).

Residues 1–149 (MSWNQYPGGG…PQLQGQGGQS (149 aa)) are disordered. The segment covering 7–18 (PGGGHHQQGGYG) has biased composition (gly residues). Pro residues predominate over residues 20–56 (RPPPPQWAQQGPPPPPNMGYRPPPPPQAYYNNPPPPQ). The segment covering 57-83 (QYQRPAPQQNGYQQGGYQQQQQSQGNY) has biased composition (low complexity). Residues H247 and C303 contribute to the active site.

The protein belongs to the peptidase C14B family.

In terms of biological role, involved in cell death (apoptosis). The sequence is that of Metacaspase-1 (MCA1) from Cryptococcus neoformans var. neoformans serotype D (strain JEC21 / ATCC MYA-565) (Filobasidiella neoformans).